The following is a 99-amino-acid chain: MSTIVRQVTVQGRVQGVGYRAFVEYQAMKLDLEGWVRNRRDGSVEALFAGPAEAVAEIIARCRRGPSSARVTKLDEQPGSVDALDLRRPGERFSTLPTL.

One can recognise an Acylphosphatase-like domain in the interval 5–97 (VRQVTVQGRV…RPGERFSTLP (93 aa)). Residues Arg-20 and Asn-38 contribute to the active site.

This sequence belongs to the acylphosphatase family.

The catalysed reaction is an acyl phosphate + H2O = a carboxylate + phosphate + H(+). In Rhodopseudomonas palustris (strain BisB18), this protein is Acylphosphatase (acyP).